We begin with the raw amino-acid sequence, 525 residues long: MTQNIHQHRILILDFGSQYTQLVARRVRELGVYCELWAWDVTEAQIRGFNPNGIILSGGPESTTEFGSPRAPEYVFNAGVPVLGVCYGMQTMAMQLGGHVEGSNEREFGYAQVEVKTDSALVRDIQDALSATGAPLLDVWMSHGDKVTAIPEGFETVASTDTCPFAIMANEEKRFYGVQFHPEVTHTRQGQRMLERFVRDICQCEALWTPAKIIDDAVTRIREQVGNDQVILGLSGGVDSSVTAMLLHRAIGDRLTCVFVDNGLLRLNEADQVLEMFGDHFGLNIVHVAAEDRFLGELAGENDPEAKRKIIGRVFVEVFDEEASKQTDVKWLAQGTIYPDVIESAASATGKAHVIKSHHNVGGLPKEMKLGLVEPLKELFKDEVRKIGLELGLPYNMLYRHPFPGPGLGVRVLGEVKKEYCDLLRRADAIFIEELHKADLYNKVSQAFTVFLPVRSVGVMGDGRKYDWVVSLRAVETIDFMTAHWAHLPYDFLGRVSNRIINEVDGISRVVYDVSGKPPATIEWE.

In terms of domain architecture, Glutamine amidotransferase type-1 spans 9 to 207 (RILILDFGSQ…VRDICQCEAL (199 aa)). C86 functions as the Nucleophile in the catalytic mechanism. Catalysis depends on residues H181 and E183. Positions 208 to 400 (WTPAKIIDDA…LGLPYNMLYR (193 aa)) constitute a GMPS ATP-PPase domain. Residue 235-241 (SGGVDSS) coordinates ATP.

As to quaternary structure, homodimer.

It catalyses the reaction XMP + L-glutamine + ATP + H2O = GMP + L-glutamate + AMP + diphosphate + 2 H(+). It participates in purine metabolism; GMP biosynthesis; GMP from XMP (L-Gln route): step 1/1. Catalyzes the synthesis of GMP from XMP. This Pectobacterium carotovorum subsp. carotovorum (strain PC1) protein is GMP synthase [glutamine-hydrolyzing].